We begin with the raw amino-acid sequence, 567 residues long: MSRISRQAYADMFGPTVGDRVRLADTALWVEVEKDFTVYGEEVKFGGGKVIRDGMGQGQMLAAEAMDLVLTNALIIDHWGIVKADIGVKHGRIAAIGKAGNPDVQPGVSVPVGPGTEVIAAEGKIVTAGGIDSHIHFICPQQVEEALTSGVTTFIGGGTGPATGTNATTCTPGPWYLARMLQAADSLPINIGLLGKGNASRPEALREQITAGAVGLKLHEDWGSTPAAIDCCLGVAEEMDIQVAIHTDTLNESGCIEDTLSAIGDRTIHTFHTEGAGGGHAPDIIRAAGQANVLPSSTNPTLPYTVNTVDEHLDMLMVCHHLDPSIAEDVAFAESRIRRETIAAEDILHDMGAFAMTSSDSQAMGRVGEVVLRTWQVAHQMKLRRGPLAPDGSYSDNFRVKRYIAKYTINPALTHGIAHEVGSVEVGKLADLVLWAPAFFAVKPALVLKGGMIATAPMGDINGSIPTPQPVHYRPMFGALGAARHTTRMTFLPQAAMDRGLAEELNLQSLIGVAHGCRRVRKADMVHNTLQPLIEVDAQTYQVRADGELLVCEPARELPLAQRYFLF.

One can recognise a Urease domain in the interval Gly129–Phe567. Positions 134, 136, and 217 each coordinate Ni(2+). Lys217 is modified (N6-carboxylysine). Substrate is bound at residue His219. The Ni(2+) site is built by His246 and His272. The active-site Proton donor is His320. Asp360 contacts Ni(2+).

This sequence belongs to the metallo-dependent hydrolases superfamily. Urease alpha subunit family. In terms of assembly, heterotrimer of UreA (gamma), UreB (beta) and UreC (alpha) subunits. Three heterotrimers associate to form the active enzyme. It depends on Ni cation as a cofactor. Post-translationally, carboxylation allows a single lysine to coordinate two nickel ions.

The protein localises to the cytoplasm. It carries out the reaction urea + 2 H2O + H(+) = hydrogencarbonate + 2 NH4(+). Its pathway is nitrogen metabolism; urea degradation; CO(2) and NH(3) from urea (urease route): step 1/1. The polypeptide is Urease subunit alpha (Pseudomonas entomophila (strain L48)).